Consider the following 457-residue polypeptide: tRNA modification GTPase MnmE (457 aa).

3 residues coordinate (6S)-5-formyl-5,6,7,8-tetrahydrofolate: arginine 22, glutamate 85, and arginine 124. Positions glycine 219–leucine 378 constitute a TrmE-type G domain. Residue asparagine 229 coordinates K(+). GTP-binding positions include asparagine 229–serine 234, threonine 248–threonine 254, aspartate 273–glycine 276, and asparagine 333–aspartate 336. Serine 233 contacts Mg(2+). K(+)-binding residues include threonine 248, valine 250, and threonine 253. Mg(2+) is bound at residue threonine 254. Lysine 457 is a binding site for (6S)-5-formyl-5,6,7,8-tetrahydrofolate.

This sequence belongs to the TRAFAC class TrmE-Era-EngA-EngB-Septin-like GTPase superfamily. TrmE GTPase family. Homodimer. Heterotetramer of two MnmE and two MnmG subunits. K(+) serves as cofactor.

It is found in the cytoplasm. Its function is as follows. Exhibits a very high intrinsic GTPase hydrolysis rate. Involved in the addition of a carboxymethylaminomethyl (cmnm) group at the wobble position (U34) of certain tRNAs, forming tRNA-cmnm(5)s(2)U34. The chain is tRNA modification GTPase MnmE from Syntrophus aciditrophicus (strain SB).